Here is a 290-residue protein sequence, read N- to C-terminus: MIYYGTMFDHKVRFSIVRMREVVEEARNRHALSYLATVVLGRALIGAALVTPWLAEKERWTLDIEGNGPIRRVVAQSTSEFTVRGYVANPKVELPLNEKGKFDVAGAIGQGVLRVVRDLGLKTPFVSQVPLVSGEIAEDLAYYFAVSEQIPSAFSIGVLVDSDGVKIAGGFAVQIIDRTLEQEKVEMIEKNIKNLPSISKLFQEAEPLDVLERIFGEKVGFVETAEIKYKCDCNREKAKNALLVLDKKELEDMRKEGKGEVVCKWCNTRYVFSEEELEELLKFKVDDSGS.

2 disulfide bridges follow: cysteine 231–cysteine 233 and cysteine 263–cysteine 266.

The protein belongs to the HSP33 family. Post-translationally, under oxidizing conditions two disulfide bonds are formed involving the reactive cysteines. Under reducing conditions zinc is bound to the reactive cysteines and the protein is inactive.

It is found in the cytoplasm. Its function is as follows. Redox regulated molecular chaperone. Protects both thermally unfolding and oxidatively damaged proteins from irreversible aggregation. Plays an important role in the bacterial defense system toward oxidative stress. This chain is 33 kDa chaperonin, found in Thermotoga maritima (strain ATCC 43589 / DSM 3109 / JCM 10099 / NBRC 100826 / MSB8).